Consider the following 184-residue polypeptide: UPS-like protein C36.10 (184 aa).

In terms of domain architecture, PRELI/MSF1 spans 1 to 172; the sequence is MKIFESCHLF…VLEKINMSVF (172 aa).

Belongs to the slowmo family.

Its subcellular location is the cytoplasm. It is found in the mitochondrion inner membrane. The protein localises to the mitochondrion intermembrane space. Required for mitochondrial morphology. May control phospholipid metabolism in the mitochondrial intermembrane space. The protein is UPS-like protein C36.10 of Schizosaccharomyces pombe (strain 972 / ATCC 24843) (Fission yeast).